We begin with the raw amino-acid sequence, 588 residues long: Adenine deaminase (588 aa).

It belongs to the metallo-dependent hydrolases superfamily. Adenine deaminase family. Homodimer. Mn(2+) is required as a cofactor.

It carries out the reaction adenine + H2O + H(+) = hypoxanthine + NH4(+). In Escherichia coli O81 (strain ED1a), this protein is Adenine deaminase.